Here is a 342-residue protein sequence, read N- to C-terminus: Cyclin-D3-1 (342 aa).

A compositionally biased stretch (polar residues) spans 322–334; that stretch reads VGSPATNYESSAS. The disordered stretch occupies residues 322 to 342; the sequence is VGSPATNYESSASSKRRRICR.

The protein belongs to the cyclin family. Cyclin D subfamily.

The chain is Cyclin-D3-1 (CYCD3-1) from Oryza sativa subsp. japonica (Rice).